The chain runs to 572 residues: Methionine--tRNA ligase (572 aa).

Positions 11-21 (PYINGIKHLGN) match the 'HIGH' region motif. Positions 143, 146, 156, and 159 each coordinate Zn(2+). The 'KMSKS' region motif lies at 346-350 (QFSTS). Thr349 contributes to the ATP binding site.

The protein belongs to the class-I aminoacyl-tRNA synthetase family. MetG type 1 subfamily. As to quaternary structure, monomer. The cofactor is Zn(2+).

The protein localises to the cytoplasm. The enzyme catalyses tRNA(Met) + L-methionine + ATP = L-methionyl-tRNA(Met) + AMP + diphosphate. In terms of biological role, is required not only for elongation of protein synthesis but also for the initiation of all mRNA translation through initiator tRNA(fMet) aminoacylation. This is Methionine--tRNA ligase from Dinoroseobacter shibae (strain DSM 16493 / NCIMB 14021 / DFL 12).